Here is a 628-residue protein sequence, read N- to C-terminus: MKNDHINYQQNLSQSPILNSNKNQTQQNQQQQQQQQQQNPQQQQQFQHQQVPQLSPQQIPFSEPLKNNLTLQHQQQQQQHQQLAGGQHGSLLRKSYSSRFHEKPQGELTKIANFQDVSPEERPSLFLLKLKQCCYVYDFSDNTYMVSKGVKQEALLQCVNFLSTNDQPLHESIYKMVFEMVAVNLFRPLPPRINPYGVMYDPEEDEPILEAAWPHIQVVYEVLLRFIDSPTFNTHIAKNYVDDRFVLQMLDLFDSEDPRERDYLKTTLHRIYGKFLGLRGFIRTAIRNLFCTFVYESHQHNGISEILEVLGSIINGFLVPLKDEHKQFLIKVLIPLHKPKSYSVYCSHLGYCMSQFIEKEPSLAEPIFKSILRLWPCGNSQKEVLFLSEMEDLLGLVSDEQFAKFRNQFFRQMTKCFQSEHFQVAERALYLFSNENIVLLIASKNNFTLALETFYKPLHENSISHWNRSIRNLSISSLKLFMEIDMDLFNKISEKYKESKKKQQQIQQREKFKQNAPETQKSKQINQNNNNNNNNINNNNNNNNNNNGSTETKADKPSMIRRKSLLPVDPSTIAALSSHRSLEDIMSTNSNSGNDDDDENNHTNHDSEIENEVKEDFRVPVNNRYTFT.

Positions 1 to 22 (MKNDHINYQQNLSQSPILNSNK) are enriched in polar residues. 3 disordered regions span residues 1-61 (MKND…QIPF), 500-558 (KKKQ…DKPS), and 577-628 (SSHR…YTFT). Low complexity-rich tracts occupy residues 23-58 (NQTQ…SPQQ) and 524-547 (QINQ…NNNN). The span at 600–618 (NNHTNHDSEIENEVKEDFR) shows a compositional bias: basic and acidic residues.

The protein belongs to the phosphatase 2A regulatory subunit B56 family. In terms of assembly, PP2A consists of a trimeric holoenzyme, composed of a 37 kDa catalytic subunit (C subunit) and a 65 kDa constant regulatory subunit (A subunit), that associates with a variety of regulatory subunits (B subunit) such as phr2AB (B55) and psrA (B56 homolog). The trimer may partially dissociates into a core 'AC' dimer equally active compared to the trimer. Seems to play a role in proper anterior patterning (pstO and pstAB).

It localises to the cytoplasm. Its subcellular location is the cytosol. Functionally, involved in developmental cell fate decision. In Dictyostelium discoideum (Social amoeba), this protein is Serine/threonine-protein phosphatase 2A regulatory subunit psrA (psrA).